Reading from the N-terminus, the 124-residue chain is Kinocilin (124 aa).

Helical transmembrane passes span 13-33 (LQLACVALGLVAGSIIIGISV) and 40-60 (MGGVFIGAAVLGLLILAYPFL). The interval 80-124 (PHPGADHGEGRSSTNGNKEGARSSLSTVSRTLEKLKPGTRGAEEC) is disordered. Polar residues predominate over residues 90–109 (RSSTNGNKEGARSSLSTVSR). Positions 110 to 124 (TLEKLKPGTRGAEEC) are enriched in basic and acidic residues.

It is found in the membrane. Functionally, may play a role in stabilizing dense microtubular networks or in vesicular trafficking. The chain is Kinocilin (KNCN) from Homo sapiens (Human).